Here is a 338-residue protein sequence, read N- to C-terminus: Ketol-acid reductoisomerase (NADP(+)) (338 aa).

In terms of domain architecture, KARI N-terminal Rossmann spans 1–181 (MKVYYDKDAD…GGGKAGIIET (181 aa)). NADP(+)-binding positions include 24–27 (YGSQ), arginine 47, and serine 52. Histidine 107 is a catalytic residue. Glycine 133 provides a ligand contact to NADP(+). Residues 182–327 (NFREETETDL…EKLRAMMPWI (146 aa)) form the KARI C-terminal knotted domain. Residues aspartate 190, glutamate 194, glutamate 226, and glutamate 230 each contribute to the Mg(2+) site. Serine 251 is a substrate binding site.

This sequence belongs to the ketol-acid reductoisomerase family. Requires Mg(2+) as cofactor.

The enzyme catalyses (2R)-2,3-dihydroxy-3-methylbutanoate + NADP(+) = (2S)-2-acetolactate + NADPH + H(+). It carries out the reaction (2R,3R)-2,3-dihydroxy-3-methylpentanoate + NADP(+) = (S)-2-ethyl-2-hydroxy-3-oxobutanoate + NADPH + H(+). The protein operates within amino-acid biosynthesis; L-isoleucine biosynthesis; L-isoleucine from 2-oxobutanoate: step 2/4. It functions in the pathway amino-acid biosynthesis; L-valine biosynthesis; L-valine from pyruvate: step 2/4. Its function is as follows. Involved in the biosynthesis of branched-chain amino acids (BCAA). Catalyzes an alkyl-migration followed by a ketol-acid reduction of (S)-2-acetolactate (S2AL) to yield (R)-2,3-dihydroxy-isovalerate. In the isomerase reaction, S2AL is rearranged via a Mg-dependent methyl migration to produce 3-hydroxy-3-methyl-2-ketobutyrate (HMKB). In the reductase reaction, this 2-ketoacid undergoes a metal-dependent reduction by NADPH to yield (R)-2,3-dihydroxy-isovalerate. This Variovorax paradoxus (strain S110) protein is Ketol-acid reductoisomerase (NADP(+)).